The primary structure comprises 274 residues: Glutamate racemase (274 aa).

Substrate is bound by residues 9–10 (DS) and 41–42 (YG). Catalysis depends on C73, which acts as the Proton donor/acceptor. 74–75 (NT) provides a ligand contact to substrate. C183 serves as the catalytic Proton donor/acceptor. 184–185 (TH) contacts substrate.

It belongs to the aspartate/glutamate racemases family.

It catalyses the reaction L-glutamate = D-glutamate. Its pathway is cell wall biogenesis; peptidoglycan biosynthesis. Functionally, provides the (R)-glutamate required for cell wall biosynthesis. This is Glutamate racemase from Shewanella baltica (strain OS223).